The following is a 413-amino-acid chain: Serine hydroxymethyltransferase (413 aa).

Residues Leu119 and 123–125 (GHL) contribute to the (6S)-5,6,7,8-tetrahydrofolate site. Lys228 carries the post-translational modification N6-(pyridoxal phosphate)lysine. (6S)-5,6,7,8-tetrahydrofolate is bound at residue 351–353 (SPF).

This sequence belongs to the SHMT family. As to quaternary structure, homodimer. Pyridoxal 5'-phosphate serves as cofactor.

The protein resides in the cytoplasm. It carries out the reaction (6R)-5,10-methylene-5,6,7,8-tetrahydrofolate + glycine + H2O = (6S)-5,6,7,8-tetrahydrofolate + L-serine. The protein operates within one-carbon metabolism; tetrahydrofolate interconversion. Its pathway is amino-acid biosynthesis; glycine biosynthesis; glycine from L-serine: step 1/1. Functionally, catalyzes the reversible interconversion of serine and glycine with tetrahydrofolate (THF) serving as the one-carbon carrier. This reaction serves as the major source of one-carbon groups required for the biosynthesis of purines, thymidylate, methionine, and other important biomolecules. Also exhibits THF-independent aldolase activity toward beta-hydroxyamino acids, producing glycine and aldehydes, via a retro-aldol mechanism. This Anoxybacillus flavithermus (strain DSM 21510 / WK1) protein is Serine hydroxymethyltransferase.